We begin with the raw amino-acid sequence, 99 residues long: Large ribosomal subunit protein uL23 (99 aa).

Belongs to the universal ribosomal protein uL23 family. In terms of assembly, part of the 50S ribosomal subunit. Contacts protein L29, and trigger factor when it is bound to the ribosome.

Its function is as follows. One of the early assembly proteins it binds 23S rRNA. One of the proteins that surrounds the polypeptide exit tunnel on the outside of the ribosome. Forms the main docking site for trigger factor binding to the ribosome. In Blochmanniella floridana, this protein is Large ribosomal subunit protein uL23.